The following is a 444-amino-acid chain: Platelet-activating factor acetylhydrolase (444 aa).

The N-terminal stretch at 1–21 is a signal peptide; it reads MLPPKLHALFCLCSCLTLVHP. N-linked (GlcNAc...) asparagine glycans are attached at residues Asn60 and Asn200. Ser274 (nucleophile) is an active-site residue. Residues Asp297 and His352 each act as charge relay system in the active site. Asn424 carries an N-linked (GlcNAc...) asparagine glycan.

This sequence belongs to the AB hydrolase superfamily. Lipase family. N-glycosylated. As to expression, plasma.

The protein localises to the secreted. The protein resides in the extracellular space. The catalysed reaction is a 1-O-alkyl-2-acetyl-sn-glycero-3-phosphocholine + H2O = a 1-O-alkyl-sn-glycero-3-phosphocholine + acetate + H(+). It catalyses the reaction 1-O-decyl-2-acetyl-sn-glycero-3-phosphocholine + H2O = 1-O-decyl-sn-glycero-3-phosphocholine + acetate + H(+). The enzyme catalyses 1-O-dodecyl-2-acetyl-sn-glycero-3-phosphocholine + H2O = 1-O-dodecyl-sn-glycero-3-phosphocholine + acetate + H(+). It carries out the reaction 1-O-tetradecyl-2-acetyl-sn-glycero-3-phosphocholine + H2O = 1-O-tetradecyl-sn-glycero-3-phosphocholine + acetate + H(+). The catalysed reaction is 1-O-hexadecyl-2-acetyl-sn-glycero-3-phosphocholine + H2O = 1-O-hexadecyl-sn-glycero-3-phosphocholine + acetate + H(+). It catalyses the reaction 1-O-octadecyl-2-acetyl-sn-glycero-3-phosphocholine + H2O = 1-O-octadecyl-sn-glycero-3-phosphocholine + acetate + H(+). The enzyme catalyses 1-hexadecanoyl-2-acetyl-sn-glycero-3-phosphocholine + H2O = 1-hexadecanoyl-sn-glycero-3-phosphocholine + acetate + H(+). It carries out the reaction 1-hexadecanoyl-2-propionyl-sn-glycero-3-phosphocholine + H2O = propanoate + 1-hexadecanoyl-sn-glycero-3-phosphocholine + H(+). The catalysed reaction is 1-hexadecanoyl-2-butanoyl-sn-glycero-3-phosphocholine + H2O = butanoate + 1-hexadecanoyl-sn-glycero-3-phosphocholine + H(+). It catalyses the reaction 1-hexadecanoyl-2-pentanoyl-sn-glycero-3-phosphocholine + H2O = pentanoate + 1-hexadecanoyl-sn-glycero-3-phosphocholine + H(+). The enzyme catalyses 1-hexadecanoyl-2-glutaroyl-sn-glycero-3-phosphocholine + H2O = glutarate + 1-hexadecanoyl-sn-glycero-3-phosphocholine + H(+). It carries out the reaction 1-hexadecanoyl-2-(5-oxopentanoyl)-sn-glycero-3-phosphocholine + H2O = 5-oxopentanoate + 1-hexadecanoyl-sn-glycero-3-phosphocholine + H(+). The catalysed reaction is 1-hexadecanoyl-2-(9-oxononanoyl)-sn-glycero-3-phosphocholine + H2O = 9-oxononanoate + 1-hexadecanoyl-sn-glycero-3-phosphocholine + H(+). It catalyses the reaction 1-hexadecanoyl-2-[9-hydroperoxy-(10E-octadecenoyl)]-sn-glycero-3-phosphocholine + H2O = 9-hydroperoxy-10E-octadecenoate + 1-hexadecanoyl-sn-glycero-3-phosphocholine + H(+). The enzyme catalyses 1-hexadecanoyl-2-(10-hydroperoxy-8E-octadecenoyl)-sn-glycero-3-phosphocholine + H2O = 10-hydroperoxy-(8E)-octadecenoate + 1-hexadecanoyl-sn-glycero-3-phosphocholine + H(+). In terms of biological role, lipoprotein-associated calcium-independent phospholipase A2 involved in phospholipid catabolism during inflammatory and oxidative stress response. At the lipid-aqueous interface, hydrolyzes the ester bond of fatty acyl group attached at sn-2 position of phospholipids (phospholipase A2 activity). Specifically targets phospholipids with a short-chain fatty acyl group at sn-2 position. Can hydrolyze phospholipids with long fatty acyl chains, only if they carry oxidized functional groups. Hydrolyzes and inactivates platelet-activating factor (PAF, 1-O-alkyl-2-acetyl-sn-glycero-3-phosphocholine), a potent pro-inflammatory signaling lipid that acts through PTAFR on various innate immune cells. Hydrolyzes oxidatively truncated phospholipids carrying an aldehyde group at omega position, preventing their accumulation in low-density lipoprotein (LDL) particles and uncontrolled pro-inflammatory effects. As part of high-density lipoprotein (HDL) particles, can hydrolyze phospholipids having long-chain fatty acyl hydroperoxides at sn-2 position and protect against potential accumulation of these oxylipins in the vascular wall. Catalyzes the release from membrane phospholipids of F2-isoprostanes, lipid biomarkers of cellular oxidative damage. In Canis lupus familiaris (Dog), this protein is Platelet-activating factor acetylhydrolase (PLA2G7).